The chain runs to 101 residues: A-type ATP synthase subunit F (101 aa).

It belongs to the V-ATPase F subunit family. Has multiple subunits, A(3), B(3), C, D, E, F, G, I and K(x); there may be a few other subunits as well.

Its subcellular location is the cell membrane. In terms of biological role, component of the A-type ATP synthase that produces ATP from ADP in the presence of a proton gradient across the membrane. The protein is A-type ATP synthase subunit F of Methanosarcina mazei (strain ATCC BAA-159 / DSM 3647 / Goe1 / Go1 / JCM 11833 / OCM 88) (Methanosarcina frisia).